A 918-amino-acid polypeptide reads, in one-letter code: DNA mismatch repair protein MutS (918 aa).

662 to 669 (GPNMAGKS) serves as a coordination point for ATP.

It belongs to the DNA mismatch repair MutS family.

This protein is involved in the repair of mismatches in DNA. It is possible that it carries out the mismatch recognition step. This protein has a weak ATPase activity. The protein is DNA mismatch repair protein MutS of Sorangium cellulosum (strain So ce56) (Polyangium cellulosum (strain So ce56)).